The chain runs to 160 residues: Large ribosomal subunit protein uL22c (160 aa).

Belongs to the universal ribosomal protein uL22 family. Part of the 50S ribosomal subunit.

Its subcellular location is the plastid. The protein localises to the chloroplast. This protein binds specifically to 23S rRNA. In terms of biological role, the globular domain of the protein is located near the polypeptide exit tunnel on the outside of the subunit, while an extended beta-hairpin is found that lines the wall of the exit tunnel in the center of the 70S ribosome. This chain is Large ribosomal subunit protein uL22c (rpl22), found in Arabidopsis thaliana (Mouse-ear cress).